We begin with the raw amino-acid sequence, 389 residues long: Cuticlin-3 (389 aa).

Residues 1 to 19 (MARYSLGLGLCLLVASVSA) form the signal peptide. Residues 20 to 354 (IPVDNNVEGE…ELCISSFHIS (335 aa)) lie on the Extracellular side of the membrane. Residues 33 to 278 (ECGPTSITVN…PTCSEPQGFG (246 aa)) form the ZP domain. Asparagine 284 is a glycosylation site (N-linked (GlcNAc...) asparagine). A helical membrane pass occupies residues 355–375 (VVTVFLGLTVFVAIFITYMIV). At 376–389 (SRMMVPSDKMQSAC) the chain is on the cytoplasmic side.

Its subcellular location is the cell membrane. Functionally, plays a role in alae formation in L1 larvae. In Caenorhabditis elegans, this protein is Cuticlin-3.